The primary structure comprises 226 residues: Cytochrome c biogenesis ATP-binding export protein CcmA (226 aa).

The region spanning leucine 19–alanine 226 is the ABC transporter domain. Glycine 51–serine 58 is a binding site for ATP.

The protein belongs to the ABC transporter superfamily. CcmA exporter (TC 3.A.1.107) family. In terms of assembly, the complex is composed of two ATP-binding proteins (CcmA) and two transmembrane proteins (CcmB).

The protein localises to the cell inner membrane. The enzyme catalyses heme b(in) + ATP + H2O = heme b(out) + ADP + phosphate + H(+). Its function is as follows. Part of the ABC transporter complex CcmAB involved in the biogenesis of c-type cytochromes; once thought to export heme, this seems not to be the case, but its exact role is uncertain. Responsible for energy coupling to the transport system. In Cupriavidus pinatubonensis (strain JMP 134 / LMG 1197) (Cupriavidus necator (strain JMP 134)), this protein is Cytochrome c biogenesis ATP-binding export protein CcmA.